We begin with the raw amino-acid sequence, 426 residues long: Serine--tRNA ligase (426 aa).

Residue 233 to 235 (TAE) coordinates L-serine. Residue 264–266 (RSE) coordinates ATP. E287 is an L-serine binding site. 351–354 (EISS) lines the ATP pocket. S387 is a binding site for L-serine.

This sequence belongs to the class-II aminoacyl-tRNA synthetase family. Type-1 seryl-tRNA synthetase subfamily. As to quaternary structure, homodimer. The tRNA molecule binds across the dimer.

The protein resides in the cytoplasm. The enzyme catalyses tRNA(Ser) + L-serine + ATP = L-seryl-tRNA(Ser) + AMP + diphosphate + H(+). The catalysed reaction is tRNA(Sec) + L-serine + ATP = L-seryl-tRNA(Sec) + AMP + diphosphate + H(+). Its pathway is aminoacyl-tRNA biosynthesis; selenocysteinyl-tRNA(Sec) biosynthesis; L-seryl-tRNA(Sec) from L-serine and tRNA(Sec): step 1/1. Functionally, catalyzes the attachment of serine to tRNA(Ser). Is also able to aminoacylate tRNA(Sec) with serine, to form the misacylated tRNA L-seryl-tRNA(Sec), which will be further converted into selenocysteinyl-tRNA(Sec). The sequence is that of Serine--tRNA ligase from Pseudomonas syringae pv. tomato (strain ATCC BAA-871 / DC3000).